Reading from the N-terminus, the 618-residue chain is Vacuolar-sorting receptor 5 (618 aa).

An N-terminal signal peptide occupies residues 1–23 (MSPSNKGTVLALILALTMVVVNG). Residues 24–563 (FSSRFFVEKS…IERRSGSRSR (540 aa)) lie on the Lumenal side of the membrane. The 107-residue stretch at 58–164 (KYGGFMIGSV…SFGDSLKKAL (107 aa)) folds into the PA domain. 3 N-linked (GlcNAc...) asparagine glycosylation sites follow: N81, N293, and N430. EGF-like domains follow at residues 412-462 (ETNE…TSCK) and 465-511 (GPAR…LKCE). Disulfide bonds link C416–C434, C423–C443, C445–C461, C469–C489, C476–C497, C499–C510, and C540–C553. One can recognise an EGF-like 3; calcium-binding domain in the interval 512-554 (DIDECKEKSACKCDGCKCKNNWGGYECKCSNNSIYMKEEDTCI). N-linked (GlcNAc...) asparagine glycosylation occurs at N542. The chain crosses the membrane as a helical span at residues 564-584 (GLFTIVVLTAIAGISLGAYIF). Topologically, residues 585-618 (YKYHLQSYMDSEIVSIMSQYIPLDSQSINQDSFK) are cytoplasmic. The Tyrosine-based internalization motif motif lies at 604–607 (YIPL).

It belongs to the VSR (BP-80) family. Expressed in seedlings, roots, leaves, flowers and siliques.

Its subcellular location is the membrane. It is found in the golgi apparatus membrane. The protein resides in the cytoplasmic vesicle. It localises to the clathrin-coated vesicle membrane. The protein localises to the prevacuolar compartment membrane. Its function is as follows. Vacuolar-sorting receptor (VSR) involved in clathrin-coated vesicles sorting from Golgi apparatus to vacuoles. The sequence is that of Vacuolar-sorting receptor 5 (VSR5) from Arabidopsis thaliana (Mouse-ear cress).